A 497-amino-acid chain; its full sequence is Membrane-bound lytic murein transglycosylase F (497 aa).

A signal peptide spans 1-29; that stretch reads MFFRPDFRPRCAKWLIATGLFLMLGACVE. A non-LT domain region spans residues 30 to 267; sequence KPTTLERVKE…RLKDRYYGHV (238 aa). The LT domain stretch occupies residues 268-497; the sequence is DVLGYVGAYT…PASSPEKPAL (230 aa). Glu-314 is an active-site residue. The interval 464–497 is disordered; it reads VADGNLHVPGVDKTQPPAPTAPVVPASSPEKPAL. A compositionally biased stretch (low complexity) spans 486-497; sequence VVPASSPEKPAL.

The protein in the N-terminal section; belongs to the bacterial solute-binding protein 3 family. This sequence in the C-terminal section; belongs to the transglycosylase Slt family.

It is found in the cell outer membrane. The catalysed reaction is Exolytic cleavage of the (1-&gt;4)-beta-glycosidic linkage between N-acetylmuramic acid (MurNAc) and N-acetylglucosamine (GlcNAc) residues in peptidoglycan, from either the reducing or the non-reducing ends of the peptidoglycan chains, with concomitant formation of a 1,6-anhydrobond in the MurNAc residue.. In terms of biological role, murein-degrading enzyme that degrades murein glycan strands and insoluble, high-molecular weight murein sacculi, with the concomitant formation of a 1,6-anhydromuramoyl product. Lytic transglycosylases (LTs) play an integral role in the metabolism of the peptidoglycan (PG) sacculus. Their lytic action creates space within the PG sacculus to allow for its expansion as well as for the insertion of various structures such as secretion systems and flagella. In Pseudomonas syringae pv. tomato (strain ATCC BAA-871 / DC3000), this protein is Membrane-bound lytic murein transglycosylase F.